The following is a 611-amino-acid chain: Dihydroxy-acid dehydratase (611 aa).

Aspartate 81 is a binding site for Mg(2+). Cysteine 122 is a binding site for [2Fe-2S] cluster. The Mg(2+) site is built by aspartate 123 and lysine 124. Lysine 124 carries the N6-carboxylysine modification. Cysteine 195 serves as a coordination point for [2Fe-2S] cluster. Glutamate 491 contributes to the Mg(2+) binding site. Serine 517 acts as the Proton acceptor in catalysis.

This sequence belongs to the IlvD/Edd family. As to quaternary structure, homodimer. Requires [2Fe-2S] cluster as cofactor. Mg(2+) serves as cofactor.

The catalysed reaction is (2R)-2,3-dihydroxy-3-methylbutanoate = 3-methyl-2-oxobutanoate + H2O. It catalyses the reaction (2R,3R)-2,3-dihydroxy-3-methylpentanoate = (S)-3-methyl-2-oxopentanoate + H2O. It functions in the pathway amino-acid biosynthesis; L-isoleucine biosynthesis; L-isoleucine from 2-oxobutanoate: step 3/4. Its pathway is amino-acid biosynthesis; L-valine biosynthesis; L-valine from pyruvate: step 3/4. Functionally, functions in the biosynthesis of branched-chain amino acids. Catalyzes the dehydration of (2R,3R)-2,3-dihydroxy-3-methylpentanoate (2,3-dihydroxy-3-methylvalerate) into 2-oxo-3-methylpentanoate (2-oxo-3-methylvalerate) and of (2R)-2,3-dihydroxy-3-methylbutanoate (2,3-dihydroxyisovalerate) into 2-oxo-3-methylbutanoate (2-oxoisovalerate), the penultimate precursor to L-isoleucine and L-valine, respectively. The sequence is that of Dihydroxy-acid dehydratase from Pasteurella multocida (strain Pm70).